Here is a 131-residue protein sequence, read N- to C-terminus: Phosphomevalonate dehydratase small subunit (131 aa).

Catalysis depends on serine 62, which acts as the Proton acceptor.

Belongs to the AcnX type II small subunit family. In terms of assembly, heterodimer composed of a large subunit (PMDh-L) and a small subunit (PMDh-S).

It catalyses the reaction (R)-5-phosphomevalonate = (2E)-3-methyl-5-phosphooxypent-2-enoate + H2O. It participates in isoprenoid biosynthesis; isopentenyl diphosphate biosynthesis via mevalonate pathway. Functionally, component of a hydro-lyase that catalyzes the dehydration of mevalonate 5-phosphate (MVA5P) to form trans-anhydromevalonate 5-phosphate (tAHMP). Involved in the archaeal mevalonate (MVA) pathway, which provides fundamental precursors for isoprenoid biosynthesis, such as isopentenyl diphosphate (IPP) and dimethylallyl diphosphate (DMAPP). The chain is Phosphomevalonate dehydratase small subunit from Methanothermobacter thermautotrophicus (strain ATCC 29096 / DSM 1053 / JCM 10044 / NBRC 100330 / Delta H) (Methanobacterium thermoautotrophicum).